The primary structure comprises 268 residues: Glucosamine-6-phosphate deaminase (268 aa).

The Proton acceptor; for enolization step role is filled by Asp72. Residue Asp141 is the For ring-opening step of the active site. Catalysis depends on His143, which acts as the Proton acceptor; for ring-opening step. Glu148 (for ring-opening step) is an active-site residue.

It belongs to the glucosamine/galactosamine-6-phosphate isomerase family. NagB subfamily. Homohexamer.

The catalysed reaction is alpha-D-glucosamine 6-phosphate + H2O = beta-D-fructose 6-phosphate + NH4(+). It functions in the pathway amino-sugar metabolism; N-acetylneuraminate degradation; D-fructose 6-phosphate from N-acetylneuraminate: step 5/5. Allosterically activated by N-acetylglucosamine 6-phosphate (GlcNAc6P). Catalyzes the reversible isomerization-deamination of glucosamine 6-phosphate (GlcN6P) to form fructose 6-phosphate (Fru6P) and ammonium ion. In Histophilus somni (strain 129Pt) (Haemophilus somnus), this protein is Glucosamine-6-phosphate deaminase.